A 393-amino-acid chain; its full sequence is Protein phosphatase 2C homolog 4 (393 aa).

The region spanning 33–368 (YNCVGSMQGY…DNMTAIIVVL (336 aa)) is the PPM-type phosphatase domain. Mn(2+)-binding residues include Asp83, Gly84, Asp310, and Asp359.

The protein belongs to the PP2C family. Mg(2+) serves as cofactor. It depends on Mn(2+) as a cofactor.

The catalysed reaction is O-phospho-L-seryl-[protein] + H2O = L-seryl-[protein] + phosphate. The enzyme catalyses O-phospho-L-threonyl-[protein] + H2O = L-threonyl-[protein] + phosphate. The protein is Protein phosphatase 2C homolog 4 (PTC4) of Saccharomyces cerevisiae (strain ATCC 204508 / S288c) (Baker's yeast).